The primary structure comprises 154 residues: Endoribonuclease YbeY (154 aa).

Zn(2+) contacts are provided by H114, H118, and H124.

The protein belongs to the endoribonuclease YbeY family. Zn(2+) is required as a cofactor.

The protein resides in the cytoplasm. Its function is as follows. Single strand-specific metallo-endoribonuclease involved in late-stage 70S ribosome quality control and in maturation of the 3' terminus of the 16S rRNA. This is Endoribonuclease YbeY from Anaplasma phagocytophilum (strain HZ).